The chain runs to 463 residues: Glutamate--tRNA ligase (463 aa).

The 'HIGH' region signature appears at 8-18 (PSPTGYLHIGG). A 'KMSKS' region motif is present at residues 236-240 (RLSKR). K239 is a binding site for ATP.

The protein belongs to the class-I aminoacyl-tRNA synthetase family. Glutamate--tRNA ligase type 1 subfamily. Monomer.

The protein localises to the cytoplasm. The catalysed reaction is tRNA(Glu) + L-glutamate + ATP = L-glutamyl-tRNA(Glu) + AMP + diphosphate. Catalyzes the attachment of glutamate to tRNA(Glu) in a two-step reaction: glutamate is first activated by ATP to form Glu-AMP and then transferred to the acceptor end of tRNA(Glu). This is Glutamate--tRNA ligase from Nitrosomonas europaea (strain ATCC 19718 / CIP 103999 / KCTC 2705 / NBRC 14298).